A 322-amino-acid chain; its full sequence is Ferrochelatase (322 aa).

Residues His194 and Glu275 each contribute to the Fe cation site.

Belongs to the ferrochelatase family.

It localises to the cytoplasm. It catalyses the reaction heme b + 2 H(+) = protoporphyrin IX + Fe(2+). Its pathway is porphyrin-containing compound metabolism; protoheme biosynthesis; protoheme from protoporphyrin-IX: step 1/1. Its function is as follows. Catalyzes the ferrous insertion into protoporphyrin IX. In Proteus mirabilis (strain HI4320), this protein is Ferrochelatase.